Reading from the N-terminus, the 304-residue chain is GS homeobox 2 (304 aa).

Positions 116 to 151 (AQFCPRVNHAHHHHHPPQHHHHHHQPQQPGSAAAAA) are disordered. Over residues 123-140 (NHAHHHHHPPQHHHHHHQ) the composition is skewed to basic residues. Over residues 141–151 (PQQPGSAAAAA) the composition is skewed to low complexity. A DNA-binding region (homeobox) is located at residues 202-261 (GKRMRTAFTSTQLLELEREFSSNMYLSRLRRIEIATYLNLSEKQVKIWFQNRRVKHKKEG). The disordered stretch occupies residues 283–304 (RSEDEDSLSPASANDDKEISPL).

It belongs to the Antp homeobox family.

It is found in the nucleus. It localises to the cytoplasm. In terms of biological role, transcription factor that binds 5'-CNAATTAG-3' DNA sequence and regulates the expression of numerous genes including genes important for brain development. During telencephalic development, causes ventralization of pallial progenitors and, depending on the developmental stage, specifies different neuronal fates. At early stages, necessary and sufficient to correctly specify the ventral lateral ganglionic eminence (LGE) and its major derivatives, the striatal projection neurons. At later stages, may specify LGE progenitors toward dorsal LGE fates, including olfactory bulb interneurons. This is GS homeobox 2 (GSX2) from Homo sapiens (Human).